Consider the following 349-residue polypeptide: E3 ubiquitin-protein ligase rnf146 (349 aa).

Residues 1–21 (MASCGEVDHSVSSLPSSKKGS) are disordered. The segment covering 10–21 (SVSSLPSSKKGS) has biased composition (low complexity). The segment at 41–79 (CAICLQSCVHPVQLPCRHVFCFLCVKGASWQSKRCALCR) adopts an RING-type zinc-finger fold. A WWE domain is found at 97-173 (ELKTGGRGAT…EHGRRRKIKR (77 aa)). A glycoprotein-binding residues include Tyr113, Arg116, Trp120, Tyr150, Gln159, Arg169, and Lys181. 2 disordered regions span residues 226–251 (TTVL…SPSL) and 264–349 (DAPE…CTEV). Polar residues predominate over residues 283 to 292 (SMSSSPNTYA). Residues 298–307 (WSDDEGDGEA) show a composition bias toward acidic residues. A compositionally biased stretch (basic and acidic residues) spans 308–317 (VEPREQRLRL).

The protein resides in the cytoplasm. The protein localises to the cytosol. It localises to the nucleus. The catalysed reaction is S-ubiquitinyl-[E2 ubiquitin-conjugating enzyme]-L-cysteine + [acceptor protein]-L-lysine = [E2 ubiquitin-conjugating enzyme]-L-cysteine + N(6)-ubiquitinyl-[acceptor protein]-L-lysine.. Its pathway is protein modification; protein ubiquitination. Functionally, E3 ubiquitin-protein ligase that specifically binds poly-ADP-ribosylated proteins and mediates their ubiquitination and subsequent degradation. May regulate many important biological processes, such as cell survival and DNA damage response. Acts as an activator of the Wnt signaling pathway by mediating the ubiquitination of poly-ADP-ribosylated proteins. Neuroprotective protein. Protects against cell death induced by DNA damaging agents and rescues cells from G1 arrest. Promotes cell survival after gamma-irradiation. Facilitates DNA repair. In Salmo salar (Atlantic salmon), this protein is E3 ubiquitin-protein ligase rnf146 (rnf146).